Consider the following 398-residue polypeptide: S-adenosylmethionine synthase (398 aa).

Histidine 15 contacts ATP. Aspartate 17 serves as a coordination point for Mg(2+). Residue glutamate 43 participates in K(+) binding. The L-methionine site is built by glutamate 56 and glutamine 99. Positions 99–109 are flexible loop; that stretch reads QSPDIAQGVDT. Residues 175–177, 243–244, aspartate 252, 258–259, alanine 275, and lysine 279 contribute to the ATP site; these read DGK, RF, and RK. An L-methionine-binding site is contributed by aspartate 252. L-methionine is bound at residue lysine 283.

The protein belongs to the AdoMet synthase family. In terms of assembly, homotetramer; dimer of dimers. Mg(2+) serves as cofactor. The cofactor is K(+).

Its subcellular location is the cytoplasm. It catalyses the reaction L-methionine + ATP + H2O = S-adenosyl-L-methionine + phosphate + diphosphate. The protein operates within amino-acid biosynthesis; S-adenosyl-L-methionine biosynthesis; S-adenosyl-L-methionine from L-methionine: step 1/1. Functionally, catalyzes the formation of S-adenosylmethionine (AdoMet) from methionine and ATP. The overall synthetic reaction is composed of two sequential steps, AdoMet formation and the subsequent tripolyphosphate hydrolysis which occurs prior to release of AdoMet from the enzyme. This is S-adenosylmethionine synthase from Parafrankia sp. (strain EAN1pec).